The sequence spans 106 residues: Late cornified envelope protein 2A (106 aa).

Over residues 1 to 10 the composition is skewed to low complexity; it reads MSCQQNQQQC. Positions 1 to 25 are disordered; it reads MSCQQNQQQCQPPPKCPPKCPPKCP. Positions 11–25 are enriched in pro residues; that stretch reads QPPPKCPPKCPPKCP.

This sequence belongs to the LCE family. In terms of assembly, interacts with CYSRT1. As to expression, skin-specific. Expression was readily detected in adult trunk skin, adult arm skin, fetal skin, penal skin, vulva, esophagus and tongue. Not expressed in the cervix, rectum, lung, colon, or placenta.

Its function is as follows. Precursors of the cornified envelope of the stratum corneum. The protein is Late cornified envelope protein 2A (LCE2A) of Homo sapiens (Human).